The chain runs to 507 residues: Efflux pump ustT (507 aa).

The next 11 membrane-spanning stretches (helical) occupy residues 59–79, 146–166, 180–200, 216–236, 240–260, 316–336, 359–379, 398–418, 421–441, 449–469, and 481–501; these read IAVV…IIVA, LLIA…VTWF, IWQL…AMIA, HAAV…LANF, IPVF…YVVV, VLLI…SGIT, AGVN…ILVK, VCLI…TLVF, TVFA…TGMV, VFTG…PMLA, and IWVG…LGAI.

This sequence belongs to the major facilitator superfamily.

The protein resides in the cell membrane. It participates in mycotoxin biosynthesis. Efflux pump; part of the gene cluster that mediates the biosynthesis of the secondary metabolite ustiloxin B, an antimitotic tetrapeptide. Probably involved in self-resistance through the export of ustiloxin B. In Aspergillus flavus (strain ATCC 200026 / FGSC A1120 / IAM 13836 / NRRL 3357 / JCM 12722 / SRRC 167), this protein is Efflux pump ustT.